The sequence spans 461 residues: Interleukin-1 receptor-associated kinase 4 (461 aa).

Met-1 is subject to N-acetylmethionine. Residues 20–104 (RKLSDFIDPQ…APASLLLPDA (85 aa)) form the Death domain. Lys-34 bears the N6-acetyllysine mark. The Protein kinase domain maps to 187–455 (SVGGNKMGEG…PDIKKVQQLL (269 aa)). ATP-binding positions include 193-201 (MGEGGFGVV) and Lys-214. Asp-312 acts as the Proton acceptor in catalysis. ATP-binding positions include 314 to 317 (KSAN) and Asp-330. Phosphothreonine occurs at positions 343 and 346. Phosphoserine is present on Ser-347.

Belongs to the protein kinase superfamily. TKL Ser/Thr protein kinase family. Pelle subfamily. In terms of assembly, associates with MYD88 and IRAK2 to form a ternary complex called the Myddosome. Once phosphorylated, IRAK4 dissociates from the receptor complex and then associates with the TNF receptor-associated factor 6 (TRAF6), IRAK1, and PELI1; this intermediate complex is required for subsequent NF-kappa-B activation. Direct binding of SMAD6 to PELI1 prevents complex formation and hence negatively regulates IL1R-TLR signaling and eventually NF-kappa-B-mediated gene expression. Interacts with IL1RL1. Interacts (when phosphorylated) with IRAK1. May interact (when phosphorylated) with IRAK3. It depends on Mg(2+) as a cofactor. Phosphorylated.

Its subcellular location is the cytoplasm. It carries out the reaction L-seryl-[protein] + ATP = O-phospho-L-seryl-[protein] + ADP + H(+). The enzyme catalyses L-threonyl-[protein] + ATP = O-phospho-L-threonyl-[protein] + ADP + H(+). Its function is as follows. Serine/threonine-protein kinase that plays a critical role in initiating innate immune response against foreign pathogens. Involved in Toll-like receptor (TLR) and IL-1R signaling pathways. Is rapidly recruited by MYD88 to the receptor-signaling complex upon TLR activation to form the Myddosome together with IRAK2. Phosphorylates initially IRAK1, thus stimulating the kinase activity and intensive autophosphorylation of IRAK1. Phosphorylates E3 ubiquitin ligases Pellino proteins (PELI1, PELI2 and PELI3) to promote pellino-mediated polyubiquitination of IRAK1. Then, the ubiquitin-binding domain of IKBKG/NEMO binds to polyubiquitinated IRAK1 bringing together the IRAK1-MAP3K7/TAK1-TRAF6 complex and the NEMO-IKKA-IKKB complex. In turn, MAP3K7/TAK1 activates IKKs (CHUK/IKKA and IKBKB/IKKB) leading to NF-kappa-B nuclear translocation and activation. Alternatively, phosphorylates TIRAP to promote its ubiquitination and subsequent degradation. Phosphorylates NCF1 and regulates NADPH oxidase activation after LPS stimulation suggesting a similar mechanism during microbial infections. The sequence is that of Interleukin-1 receptor-associated kinase 4 (IRAK4) from Bos taurus (Bovine).